The following is a 198-amino-acid chain: Recombination protein RecR (198 aa).

A C4-type zinc finger spans residues 57 to 72 (CPVCFNITDAERCDVC). A Toprim domain is found at 80–173 (NLICVVEEPG…VVSRIAYGLP (94 aa)).

It belongs to the RecR family.

In terms of biological role, may play a role in DNA repair. It seems to be involved in an RecBC-independent recombinational process of DNA repair. It may act with RecF and RecO. This chain is Recombination protein RecR, found in Deinococcus deserti (strain DSM 17065 / CIP 109153 / LMG 22923 / VCD115).